Here is a 363-residue protein sequence, read N- to C-terminus: Trichothecene biosynthesis protein 14 (363 aa).

This sequence belongs to the TRI14 family.

Functionally, part of the gene cluster that mediates the production of the antimicrobial trichothecene harzianum A (HA) that plays a role in Botrytis cinerea antagonistic activity and plant defense priming. The biosynthesis of harzianum A begins with the cyclization of farnesyl diphosphate to trichodiene and is catalyzed by the trichodiene synthase TRI5. Trichodiene undergoes a series of oxygenations catalyzed by the cytochrome P450 monooxygenase TRI4. TRI4 controls the addition of 3 oxygens at C-2, C-11, and the C-12, C-13-epoxide to form the intermediate isotrichodiol. Isotrichodiol then undergoes a non-enzymatic isomerization and cyclization to form 12,13-epoxytrichothec-9-ene (EPT) which is further converted to trichodermol by the cytochrome P450 monooxygenase TRI11 via C-4 hydroxylation. The last step of HA synthesis is esterification of an octatriendioyl moiety to the C-4 oxygen of trichodermol. The octatriendioyl moiety is probably produced by the polyketide synthase TRI17 and the esterification performed by the trichothecene O-acetyltransferase TRI3. This is Trichothecene biosynthesis protein 14 from Trichoderma arundinaceum.